We begin with the raw amino-acid sequence, 64 residues long: Large ribosomal subunit protein bL28c (64 aa).

The protein belongs to the bacterial ribosomal protein bL28 family.

The protein localises to the plastid. It is found in the chloroplast. This Gracilaria tenuistipitata var. liui (Red alga) protein is Large ribosomal subunit protein bL28c.